A 1439-amino-acid polypeptide reads, in one-letter code: Mediator of RNA polymerase II transcription subunit 23 (1439 aa).

Residues 282 to 318 (SQMLNLQKHQKQRYNALEEQLVNLIVQAMEMTEANDA) adopt a coiled-coil conformation. Positions 358–625 (HIVLALHEKL…HHVPTHYRVQ (268 aa)) are interaction with Hsf. 2 disordered regions span residues 1338–1372 (NDNTSNNAITSQTQSPMQTQHQQQPQQPHQQQQQQ) and 1401–1439 (SVPLGSGGNLQQQQQINQQQQMYMQHMQQHQHMQNMRHN). Composition is skewed to low complexity over residues 1348–1372 (SQTQSPMQTQHQQQPQQPHQQQQQQ) and 1411–1439 (QQQQQINQQQQMYMQHMQQHQHMQNMRHN).

It belongs to the Mediator complex subunit 23 family. As to quaternary structure, component of the Mediator complex. Interacts with Hsf.

The protein localises to the nucleus. Its function is as follows. Component of the Mediator complex, a coactivator involved in the regulated transcription of nearly all RNA polymerase II-dependent genes. Mediator functions as a bridge to convey information from gene-specific regulatory proteins to the basal RNA polymerase II transcription machinery. Mediator is recruited to promoters by direct interactions with regulatory proteins and serves as a scaffold for the assembly of a functional preinitiation complex with RNA polymerase II and the general transcription factors. Required for transcriptional activation in response to heat shock. In Drosophila melanogaster (Fruit fly), this protein is Mediator of RNA polymerase II transcription subunit 23 (MED23).